Here is a 126-residue protein sequence, read N- to C-terminus: Aspartate 1-decarboxylase (126 aa).

Catalysis depends on Ser-25, which acts as the Schiff-base intermediate with substrate; via pyruvic acid. Ser-25 is subject to Pyruvic acid (Ser). Residue Thr-57 participates in substrate binding. Tyr-58 serves as the catalytic Proton donor. 73-75 (GAA) is a substrate binding site.

This sequence belongs to the PanD family. In terms of assembly, heterooctamer of four alpha and four beta subunits. The cofactor is pyruvate. In terms of processing, is synthesized initially as an inactive proenzyme, which is activated by self-cleavage at a specific serine bond to produce a beta-subunit with a hydroxyl group at its C-terminus and an alpha-subunit with a pyruvoyl group at its N-terminus.

Its subcellular location is the cytoplasm. The catalysed reaction is L-aspartate + H(+) = beta-alanine + CO2. It participates in cofactor biosynthesis; (R)-pantothenate biosynthesis; beta-alanine from L-aspartate: step 1/1. Its function is as follows. Catalyzes the pyruvoyl-dependent decarboxylation of aspartate to produce beta-alanine. The sequence is that of Aspartate 1-decarboxylase from Psychrobacter sp. (strain PRwf-1).